A 178-amino-acid chain; its full sequence is Large ribosomal subunit protein bL25 (178 aa).

The protein belongs to the bacterial ribosomal protein bL25 family. CTC subfamily. Part of the 50S ribosomal subunit; part of the 5S rRNA/L5/L18/L25 subcomplex. Contacts the 5S rRNA. Binds to the 5S rRNA independently of L5 and L18.

Functionally, this is one of the proteins that binds to the 5S RNA in the ribosome where it forms part of the central protuberance. This Helicobacter hepaticus (strain ATCC 51449 / 3B1) protein is Large ribosomal subunit protein bL25.